The chain runs to 127 residues: Lysozyme C (127 aa).

Residues 1–127 (KDIPRCELVK…KDLSSYVRGC (127 aa)) enclose the C-type lysozyme domain. Intrachain disulfides connect C6/C127, C30/C115, C64/C80, and C76/C94. Active-site residues include E35 and D52. Ca(2+)-binding residues include K82, D85, N87, D90, and D91.

This sequence belongs to the glycosyl hydrolase 22 family. As to quaternary structure, monomer. Requires Ca(2+) as cofactor.

The protein localises to the secreted. It catalyses the reaction Hydrolysis of (1-&gt;4)-beta-linkages between N-acetylmuramic acid and N-acetyl-D-glucosamine residues in a peptidoglycan and between N-acetyl-D-glucosamine residues in chitodextrins.. In terms of biological role, lysozymes have primarily a bacteriolytic function; those in tissues and body fluids are associated with the monocyte-macrophage system and enhance the activity of immunoagents. This Columba livia (Rock dove) protein is Lysozyme C (LYZ).